The primary structure comprises 344 residues: Programmed cell death protein 2 (344 aa).

Residues C135, C138, C146, C149, C155, H159, H168, and C172 each coordinate Zn(2+). The segment at 135–172 (CRVCGCSGPKRCSRCHKAHYCSKEHQSLDWRLGHKQAC) adopts an MYND-type; atypical zinc-finger fold.

Ubiquitinated by PRKN, promoting proteasomal degradation.

It is found in the nucleus. Functionally, may be a DNA-binding protein with a regulatory function. May play an important role in cell death and/or in regulation of cell proliferation. The polypeptide is Programmed cell death protein 2 (PDCD2) (Bos taurus (Bovine)).